Consider the following 184-residue polypeptide: Large ribosomal subunit protein uL6 (184 aa).

The protein belongs to the universal ribosomal protein uL6 family. Part of the 50S ribosomal subunit.

Functionally, this protein binds to the 23S rRNA, and is important in its secondary structure. It is located near the subunit interface in the base of the L7/L12 stalk, and near the tRNA binding site of the peptidyltransferase center. The sequence is that of Large ribosomal subunit protein uL6 from Methanosphaera stadtmanae (strain ATCC 43021 / DSM 3091 / JCM 11832 / MCB-3).